We begin with the raw amino-acid sequence, 65 residues long: Large ribosomal subunit protein bL35 (65 aa).

Belongs to the bacterial ribosomal protein bL35 family.

This Yersinia enterocolitica serotype O:8 / biotype 1B (strain NCTC 13174 / 8081) protein is Large ribosomal subunit protein bL35.